Reading from the N-terminus, the 86-residue chain is Neurotoxin LmNaTx1 (86 aa).

The N-terminal stretch at 1-18 is a signal peptide; sequence MKILIIFVIAITVVGVQS. Positions 19–85 constitute an LCN-type CS-alpha/beta domain; the sequence is KDGYPIYSTG…VWTYAENTCG (67 aa). 4 disulfides stabilise this stretch: C33–C84, C37–C58, C44–C65, and C48–C67. At C84 the chain carries Cysteine amide.

Belongs to the long (4 C-C) scorpion toxin superfamily. Sodium channel inhibitor family. Beta subfamily. In terms of tissue distribution, expressed by the venom gland.

The protein localises to the secreted. Binds voltage-independently at site-4 of sodium channels (Nav) and shift the voltage of activation toward more negative potentials thereby affecting sodium channel activation and promoting spontaneous and repetitive firing. In Lychas mucronatus (Chinese swimming scorpion), this protein is Neurotoxin LmNaTx1.